The sequence spans 507 residues: MTFAEEKTYKYIRYNHSKFCCVDVLEILPYLSCLTTSDQDRLRASYKQLGNQGTLWELFNTLQRRPGWVEVFIRALRICELPGLAEQVTRVYQSYLPPGASLHSLDPLQSPRIPTTVSEPSAFAAGHTIPDSGFQDKPGYPKPVQDTQPPKSPVENSEEPPQANFGAIPRMSGDSLISSPNPPALSPQPSREHPEQEPELGGPSTANVDSVPIATYGPVSPTVSFQPLPRIAPRTNLSPGVTVSALSAKTTLSSSSTGSAFAKGAGDQAKAATCVSTKEGVPTNSVTTSSVPSIKPVPVNTMSSKLPISTKSTAATPSTVPTNIAPSKLPINSVYTGIVPSKVTASVAKASASTMPPERNNKQAKETLEAPATVVTTGSSLTRPDISSRSLHSGPELSKPGVLVSQVDNEPFSACSMDLAISPSTSLGSEPNHGPEENEYSSFRIQVDKSPSVDLLGSPEPLATQQSPEEEEPCASSVSWAKWLGATSALLAAFLAVMLYRSRHLAQ.

Residues 1–482 (MTFAEEKTYK…PCASSVSWAK (482 aa)) are Cytoplasmic-facing. Glycyl lysine isopeptide (Lys-Gly) (interchain with G-Cter in ubiquitin) cross-links involve residues lysine 7 and lysine 10. One can recognise a CARD domain in the interval 10–77 (KYIRYNHSKF…WVEVFIRALR (68 aa)). The tract at residues 10–77 (KYIRYNHSKF…WVEVFIRALR (68 aa)) is required for interaction with NLRX1. Cysteine 79 is lipidated: S-palmitoyl cysteine. Disordered regions lie at residues 123–238 (FAAG…TNLS), 250–326 (TTLS…NIAP), and 350–401 (ASAS…SKPG). The segment at 143 to 147 (PVQDT) is interaction with TRAF2. A phosphoserine mark is found at serine 152, serine 157, serine 172, serine 178, serine 186, and serine 220. Residues 153-158 (PVENSE) form an interaction with TRAF6 region. Arginine 234 carries the post-translational modification Asymmetric dimethylarginine. Composition is skewed to low complexity over residues 250–266 (TTLS…KGAG) and 281–293 (VPTN…SVPS). Serine 256 bears the Phosphoserine mark. Residues 300-325 (NTMSSKLPISTKSTAATPSTVPTNIA) show a composition bias toward polar residues. Lysine 305 is covalently cross-linked (Glycyl lysine isopeptide (Lys-Gly) (interchain with G-Cter in ubiquitin)). An interaction with DHX33 region spans residues 340 to 507 (PSKVTASVAK…MLYRSRHLAQ (168 aa)). Residues 359 to 368 (RNNKQAKETL) show a composition bias toward basic and acidic residues. Residues 374–391 (VVTTGSSLTRPDISSRSL) are compositionally biased toward polar residues. At serine 387 the chain carries Phosphoserine. Positions 419–422 (LAIS) match the pLxIS motif motif. Position 422 is a phosphoserine; by TBK1 (serine 422). The segment at 423–474 (PSTSLGSEPNHGPEENEYSSFRIQVDKSPSVDLLGSPEPLATQQSPEEEEPC) is disordered. The interaction with TRAF6 stretch occupies residues 435–440 (PEENEY). The chain crosses the membrane as a helical span at residues 483–500 (WLGATSALLAAFLAVMLY). Topologically, residues 501–507 (RSRHLAQ) are mitochondrial intermembrane.

In terms of assembly, self-associates and polymerizes (via CARD domains) to form 400 nM long three-stranded helical filaments on mitochondria, filament nucleation requires interaction with RIGI whose CARD domains act as a template for filament assembly. Interacts with RIGI, IFIH1/MDA5, TRAF2, TRAF6 and C1QBP. May interact with FADD, RIPK1, CHUK and IKBKB. Interacts (when phosphorylated) with IRF3; following activation and phosphorylation on the pLxIS motif by TBK1, recruits IRF3. Interacts with NLRX1. Interaction with NLRX1 requires the CARD domain. Interacts with PSMA7. Interacts with TRAFD1. Interacts (via C-terminus) with PCBP2 in a complex containing MAVS/IPS1, PCBP2 and ITCH. Interacts with CYLD. Interacts with SRC. Interacts with DHX58/LGP2 and IKBKE. Interacts with STING1. Interacts with IFIT3 (via N-terminus). Interacts with TBK1 only in the presence of IFIT3. Interacts with TTLL12; the interaction prevents MAVS binding to TBK1 and IKBKE. Interacts with MUL1. Interacts with ANKRD17. Interacts with NDFIP1. Interacts with SMURF1; the interaction is mediated by NDFIP1 and leads to MAVS ubiquitination and degradation. Interacts with UBXN1; this interaction inhibits MAVS-mediated antiviral pathway. Interacts (via C-terminus) with GPATCH3; the interaction is markedly increased upon viral infection. Directly interacts (via CARD domain) with ATG5 and ATG12, either as ATG5 and ATG12 monomers or as ATG12-ATG5 conjugates. Interacts with DHX33 (via the helicase C-terminal domain). Interacts with DDX3X (via C-terminus); this interaction may occur rapidly, but transiently after viral infection. The interaction with DDX3X potentiates MAVS-mediated IFNB induction. Conversely inhibition of this interaction prevents MAVS-mediated IFNB induction. Transiently interacts with TRAF3 early during viral infection. Interacts with CLPB. Interacts with TRAF3IP3. Interacts with TOMM70; the interaction is enhanced by virus infection. Interacts with ZNFX1. Interacts with DHX15. Interacts with N4BP3; this interaction promotes the polyubiquitination of MAVS. Interacts with TAX1BP1; this interaction induces MAVS polyubiquitination. Interacts with NLRP3; promoting NLRP3 recruitment to mitochondria and activation of the NLRP3 inflammasome. Interacts with ECSIT; this interaction bridges RIGI to the MAVS complex at the mitochondrion. Interacts with UBL7; this interaction promotes MAVS 'Lys-27'-linked ubiquitination leading to type I interferon production. Interacts (via transmembrane domain) with SMIM30/MAVI1 (via transmembrane domain); the interaction disrupts MAVS interaction with RIGI and inhibits MAVS aggregation, resulting in the repression of type I interferon signaling and innate immune responses. Following activation, phosphorylated by TBK1 at Ser-422 in the pLxIS motif. The phosphorylated pLxIS motif constitutes an IRF3-binding motif, leading to recruitment of the transcription factor IRF3 to induce type-I interferons and other cytokines. Post-translationally, ubiquitinated. Undergoes 'Lys-48'-linked polyubiquitination catalyzed by ITCH; ITCH-dependent polyubiquitination is mediated by the interaction with PCBP2 and leads to MAVS/IPS1 proteasomal degradation. Ubiquitinated by RNF125, leading to its degradation by the proteasome. Undergoes 'Lys-48'-linked ubiquitination catalyzed by SMURF1. Undergoes 'Lys-48'-linked ubiquitination catalyzed by MARCHF5 at Lys-7, leading to proteasomal degradation. Ubiquitinated via 'Lys-63'-linked ubiquitination at Lys-10 by TRIM31, promoting MAVS polymerization and formation of three-stranded helical filaments on mitochondria. Undergoes 'Lys-63'-linked ubiquitination leading to enhanced interaction between MAVS and TRAF2. Undergoes 'Lys-27'-linked ubiquitination by UBE2N and TRIM21 leading to enhanced interaction between MAVS and TBK1. Deubiquitinated by USP10 leading to attenuation of RIGI-mediated MAVS aggregation and production of type I interferon. Undergoes 'Lys-48'-linked polyubiquitination catalyzed by RNF115 leading to its degradation. In terms of processing, proteolytically cleaved by apoptotic caspases during apoptosis, leading to its inactivation. Cleavage by CASP3 during virus-induced apoptosis inactivates it, preventing cytokine overproduction. Palmitoylated by ZHDDC4. Palmitoylation promotes MAVS stabilization and activation by inhibiting 'Lys-48'- but facilitating 'Lys-63'-linked ubiquitination.

The protein resides in the mitochondrion outer membrane. It localises to the mitochondrion. The protein localises to the peroxisome. In terms of biological role, adapter required for innate immune defense against viruses. Acts downstream of DHX33, RIGI and IFIH1/MDA5, which detect intracellular dsRNA produced during viral replication, to coordinate pathways leading to the activation of NF-kappa-B, IRF3 and IRF7, and to the subsequent induction of antiviral cytokines such as IFN-beta and RANTES (CCL5). Peroxisomal and mitochondrial MAVS act sequentially to create an antiviral cellular state. Upon viral infection, peroxisomal MAVS induces the rapid interferon-independent expression of defense factors that provide short-term protection, whereas mitochondrial MAVS activates an interferon-dependent signaling pathway with delayed kinetics, which amplifies and stabilizes the antiviral response. May activate the same pathways following detection of extracellular dsRNA by TLR3. May protect cells from apoptosis. Involved in NLRP3 inflammasome activation by mediating NLRP3 recruitment to mitochondria. The chain is Mitochondrial antiviral-signaling protein (Mavs) from Rattus norvegicus (Rat).